The primary structure comprises 415 residues: MLSWPAPQIPRLPGTGEPVRVLDTATGRLVVAATGPHARLYVCGITPYDATHLGHASTYVAFDVLVRAWLDEGKTVTYASNVTDVDDPLLERATATGVDWRDLAAQQTALYASDMTTLGVVPPDVYRGVVESVPQVVAAVDALLSRDAAYRLPAPDGGDDVYADLSADPGFGSVAGLEHAAMLALSAERGGDPDRPGKRSPLDPLLWRAERPGEPAWDAPGLGRGRPGWHVECAVIASDGLGVPFDVQGGGSDLAFPHHESSASHLRVLTGTPQPAAAHVHTGMVGYRGHKMSKSLGNLVLVSQLVADGVEPMAVRLAVLAHRYRSDWEWTDDVLATAQQRVARWRRALSGNGGPAAQPVLDGVRAAVADDLDTPRALAVVDAWATAALAGEVPFEEGAPGVVARTVDALLGVRM.

Cys43 provides a ligand contact to Zn(2+). Residues 43 to 46 (CGIT), Thr58, and 81 to 83 (NVT) contribute to the L-cysteinyl-5'-AMP site. Positions 45-55 (ITPYDATHLGH) match the 'HIGH' region motif. A 'ERGGDP' region motif is present at residues 188 to 193 (ERGGDP). Trp229 serves as a coordination point for L-cysteinyl-5'-AMP. A Zn(2+)-binding site is contributed by Cys233. 251–253 (GSD) serves as a coordination point for L-cysteinyl-5'-AMP. His258 is a binding site for Zn(2+). Position 285 (Val285) interacts with L-cysteinyl-5'-AMP. The 'KMSKS' region motif lies at 291 to 295 (KMSKS).

Belongs to the class-I aminoacyl-tRNA synthetase family. MshC subfamily. As to quaternary structure, monomer. Zn(2+) serves as cofactor.

It carries out the reaction 1D-myo-inositol 2-amino-2-deoxy-alpha-D-glucopyranoside + L-cysteine + ATP = 1D-myo-inositol 2-(L-cysteinylamino)-2-deoxy-alpha-D-glucopyranoside + AMP + diphosphate + H(+). Functionally, catalyzes the ATP-dependent condensation of GlcN-Ins and L-cysteine to form L-Cys-GlcN-Ins. The protein is L-cysteine:1D-myo-inositol 2-amino-2-deoxy-alpha-D-glucopyranoside ligase of Cellulomonas flavigena (strain ATCC 482 / DSM 20109 / BCRC 11376 / JCM 18109 / NBRC 3775 / NCIMB 8073 / NRS 134).